Here is a 497-residue protein sequence, read N- to C-terminus: Probable cytosol aminopeptidase (497 aa).

Positions 263 and 268 each coordinate Mn(2+). Lys275 is a catalytic residue. Asp286, Asp345, and Glu347 together coordinate Mn(2+). Arg349 is an active-site residue.

The protein belongs to the peptidase M17 family. The cofactor is Mn(2+).

It is found in the cytoplasm. The catalysed reaction is Release of an N-terminal amino acid, Xaa-|-Yaa-, in which Xaa is preferably Leu, but may be other amino acids including Pro although not Arg or Lys, and Yaa may be Pro. Amino acid amides and methyl esters are also readily hydrolyzed, but rates on arylamides are exceedingly low.. It catalyses the reaction Release of an N-terminal amino acid, preferentially leucine, but not glutamic or aspartic acids.. Its function is as follows. Presumably involved in the processing and regular turnover of intracellular proteins. Catalyzes the removal of unsubstituted N-terminal amino acids from various peptides. This chain is Probable cytosol aminopeptidase, found in Sinorhizobium fredii (strain NBRC 101917 / NGR234).